The chain runs to 883 residues: Putative GTP diphosphokinase RSH1, chloroplastic (883 aa).

A chloroplast-targeting transit peptide spans 1-55 (MTSASSMSVSVECVNICNLTKGDGNARSDCSALSCAWKAPRALTGFLASTAHPPV). Residues 172–279 (FIIHPVAVAR…VKLADRLHNM (108 aa)) form the HD domain. A TGS domain is found at 562–625 (LGSRVFVFTP…ENAEVVEIVT (64 aa)). Over residues 710–726 (QSQDKSRDTTPAPQNGS) the composition is skewed to polar residues. The segment at 710–746 (QSQDKSRDTTPAPQNGSVWAPKVNGKHNKAIKNSSSD) is disordered. In terms of domain architecture, ACT spans 796-867 (WLCVVSMDRK…LVLGVLGWSS (72 aa)).

This sequence belongs to the RelA/SpoT family. In terms of assembly, interacts with RPP5.

Its subcellular location is the plastid. It localises to the chloroplast. It catalyses the reaction GTP + ATP = guanosine 3'-diphosphate 5'-triphosphate + AMP. Its function is as follows. May be involved in a rapid plant ppGpp (guanosine 3'-diphosphate 5'-diphosphate)-mediated response to pathogens and other stresses. The sequence is that of Putative GTP diphosphokinase RSH1, chloroplastic (RSH1) from Arabidopsis thaliana (Mouse-ear cress).